The following is a 41-amino-acid chain: MKVLKSLKSAKARHPDCQIVRRRGRLYVICKSNPRFKAVQK.

Belongs to the bacterial ribosomal protein bL36 family.

The protein is Large ribosomal subunit protein bL36 of Vibrio vulnificus (strain YJ016).